The chain runs to 309 residues: Glutaminase (309 aa).

Substrate-binding residues include serine 65, asparagine 117, glutamate 162, asparagine 169, tyrosine 193, tyrosine 245, and valine 263.

Belongs to the glutaminase family. In terms of assembly, homotetramer.

The catalysed reaction is L-glutamine + H2O = L-glutamate + NH4(+). The sequence is that of Glutaminase from Bacillus cereus (strain ATCC 10987 / NRS 248).